The primary structure comprises 270 residues: 2-C-methyl-D-erythritol 4-phosphate cytidylyltransferase (270 aa).

The segment at 1-33 (MSDESRPSPAETPATTFAETSAETSAAGRSPAR) is disordered. Residues 7–27 (PSPAETPATTFAETSAETSAA) show a composition bias toward low complexity.

Belongs to the IspD/TarI cytidylyltransferase family. IspD subfamily.

The enzyme catalyses 2-C-methyl-D-erythritol 4-phosphate + CTP + H(+) = 4-CDP-2-C-methyl-D-erythritol + diphosphate. Its pathway is isoprenoid biosynthesis; isopentenyl diphosphate biosynthesis via DXP pathway; isopentenyl diphosphate from 1-deoxy-D-xylulose 5-phosphate: step 2/6. Catalyzes the formation of 4-diphosphocytidyl-2-C-methyl-D-erythritol from CTP and 2-C-methyl-D-erythritol 4-phosphate (MEP). The sequence is that of 2-C-methyl-D-erythritol 4-phosphate cytidylyltransferase from Streptomyces coelicolor (strain ATCC BAA-471 / A3(2) / M145).